The sequence spans 470 residues: Cysteine--tRNA ligase (470 aa).

C27 lines the Zn(2+) pocket. The 'HIGH' region motif lies at 29–39 (PTVYNHIHIGN). Zn(2+) is bound by residues C207, H232, and E236. A 'KMSKS' region motif is present at residues 265–269 (KMAKS). K268 is an ATP binding site.

This sequence belongs to the class-I aminoacyl-tRNA synthetase family. Monomer. Zn(2+) is required as a cofactor.

The protein localises to the cytoplasm. The catalysed reaction is tRNA(Cys) + L-cysteine + ATP = L-cysteinyl-tRNA(Cys) + AMP + diphosphate. This Rubrobacter xylanophilus (strain DSM 9941 / JCM 11954 / NBRC 16129 / PRD-1) protein is Cysteine--tRNA ligase.